The primary structure comprises 132 residues: uncharacterized protein (132 aa).

The signal sequence occupies residues 1-24; it reads MVTIGSSSLVLFLFFVVFVQITYT. The next 2 membrane-spanning stretches (helical) occupy residues 75–95 and 112–132; these read YVNV…ILGI and ESAI…VYIH.

Its subcellular location is the membrane. This is an uncharacterized protein from Saccharomyces cerevisiae (strain ATCC 204508 / S288c) (Baker's yeast).